The sequence spans 397 residues: MEIGTPLFEGSKKILLLGSGELGKEMAIEAQRMGLEVVALDRYDLAPAMHVAHRKYVVDMMNPNAIKAVVKRERPDAIIAEIEAINTDALIELESNGFRVVPNANAVKACMNRIELRRFAAEKLKLPTTKYAFAENEEEVKRACKDIGFPCLIKPEMSSSGHGHVLVNKIENVEEAYRESISHARGKSRRVIVEEFVKIDTELTVLTYRYHSNSDSIITKTIEPIEHKRPSYYYVESWHPSNVSQGVKETARGIAQKVAEELGGLGIYGVEIIVSGNRILFSEVAPRPHDTGLVTLASSDINEFQIHVRSAIGLPTPEVKLVSPAASHVILAQTENVWGPKFLNIEKAMEIPGVQVRLFGKPVTYEKRRMGVVLATGNSVEEALEKVRKASSIILVK.

N(1)-(5-phospho-beta-D-ribosyl)glycinamide contacts are provided by residues 21–22 and E81; that span reads EL. Residues R113, K154, 194 to 197, and E202 contribute to the ATP site; that span reads EEFV. One can recognise an ATP-grasp domain in the interval 118 to 312; sequence RFAAEKLKLP…EFQIHVRSAI (195 aa). Positions 271 and 283 each coordinate Mg(2+). N(1)-(5-phospho-beta-D-ribosyl)glycinamide is bound by residues D290, K361, and 368–369; that span reads RR.

Belongs to the PurK/PurT family. As to quaternary structure, homodimer.

The enzyme catalyses N(1)-(5-phospho-beta-D-ribosyl)glycinamide + formate + ATP = N(2)-formyl-N(1)-(5-phospho-beta-D-ribosyl)glycinamide + ADP + phosphate + H(+). It participates in purine metabolism; IMP biosynthesis via de novo pathway; N(2)-formyl-N(1)-(5-phospho-D-ribosyl)glycinamide from N(1)-(5-phospho-D-ribosyl)glycinamide (formate route): step 1/1. In terms of biological role, involved in the de novo purine biosynthesis. Catalyzes the transfer of formate to 5-phospho-ribosyl-glycinamide (GAR), producing 5-phospho-ribosyl-N-formylglycinamide (FGAR). Formate is provided by PurU via hydrolysis of 10-formyl-tetrahydrofolate. This is Formate-dependent phosphoribosylglycinamide formyltransferase from Saccharolobus solfataricus (strain ATCC 35092 / DSM 1617 / JCM 11322 / P2) (Sulfolobus solfataricus).